A 753-amino-acid polypeptide reads, in one-letter code: Centromere protein I (753 aa).

Over residues 1-15 (MQRRQSSKHSKRPLQ) the composition is skewed to basic residues. A disordered region spans residues 1 to 54 (MQRRQSSKHSKRPLQVHHSNQTDLSAWRKGGTVDTEKSAQNRQSLSDQKNDNEQ).

It belongs to the CENP-I/CTF3 family. In terms of assembly, component of the CENPA-HI complex, at least composed of CENPH, CENPI, CENPK, CENPL, CENPM, CENPO and CENPP.

It localises to the nucleus. It is found in the chromosome. The protein resides in the centromere. Its function is as follows. Component of the CENPA-HI complex, a centromeric complex involved in assembly of kinetochore proteins, mitotic progression and chromosome segregation. Required for the localization of CENPC but not CENPA to the centromere. It however may be involved in incorporation of newly synthesized CENPA into centromeres via its interaction with the CENPA-NAC complex. In Gallus gallus (Chicken), this protein is Centromere protein I (CENPI).